The chain runs to 207 residues: MGGTMSKCSPVGWPAIRERIRRAAPAAEGVGAASRDLDKYGALTSSNTPANNPDCAWLEAQEEEEEVGFPVRPQVPLRPMTYKAAFDLSLFLKEKGGLEGLIYSKKRQEILDLWVYNTQGFFPDWQNYTPGPGVRYPLTFGWCFKLVPVDPSEVEEINEGENNCLLHPASLHGMEDEDREVLKWKFDSHLARRHMARELHPEYYKDC.

Gly2 carries the N-myristoyl glycine; by host lipid modification. Residue Ser6 is modified to Phosphoserine; by host. The acidic; interacts with host PACS1 and PACS2; stabilizes the interaction of NEF/MHC-I with host AP1M1; necessary for MHC-I internalization stretch occupies residues 62–66; the sequence is EEEEE. Residues 70-79 form an SH3-binding; interaction with Src family tyrosine kinases region; it reads PVRPQVPLRP. Residues 73–76 carry the PxxP; stabilizes the interaction of NEF/MHC-I with host AP1M1; necessary for MHC-I internalization motif; sequence PQVP. The mediates dimerization, Nef-PTE1 interaction stretch occupies residues 109–125; the sequence is EILDLWVYNTQGFFPDW. Positions 149–181 are binding to ATP6V1H; it reads VDPSEVEEINEGENNCLLHPASLHGMEDEDREV. The Dileucine internalization motif; necessary for CD4 internalization signature appears at 165–166; the sequence is LL. The Diacidic; necessary for CD4 internalization signature appears at 175–176; it reads ED.

The protein belongs to the lentivirus primate group Nef protein family. In terms of assembly, monomer; cytosolic form. Homodimer; membrane bound form. Interacts with Nef associated p21-activated kinase (PAK2); this interaction activates PAK2. Associates with the Nef-MHC-I-AP1 complex; this complex is required for MHC-I internalization. Interacts (via C-terminus) with host PI3-kinase. Interacts with host PACS1; this interaction seems to be weak. Interacts with host PACS2. Interacts with host LCK and MAPK3; these interactions inhibit the kinase activity of the latter. Interacts with host ATP6V1H; this interaction may play a role in CD4 endocytosis. Associates with the CD4-Nef-AP2 complex; this complex is required for CD4 internalization. Interacts with host AP2 subunit alpha and AP2 subunit sigma2. Interacts with TCR-zeta chain; this interaction up-regulates the Fas ligand (FasL) surface expression. Interacts with host HCK, LYN, and SRC; these interactions activate the Src family kinases. Interacts with MAP3K5; this interaction inhibits the Fas and TNFR-mediated death signals. Interacts with beta-COP and PTE1. Interacts with human RACK1; this increases Nef phosphorylation by PKC. Interacts with TP53; this interaction decreases the half-life of TP53, protecting the infected cell against p53-mediated apoptosis. In terms of processing, the virion-associated Nef proteins are cleaved by the viral protease to release the soluble C-terminal core protein. Nef is probably cleaved concomitantly with viral structural proteins on maturation of virus particles. Myristoylated. Post-translationally, phosphorylated on serine residues, probably by host PKCdelta and theta.

The protein localises to the host cell membrane. Its subcellular location is the virion. It is found in the secreted. It localises to the host Golgi apparatus membrane. Factor of infectivity and pathogenicity, required for optimal virus replication. Alters numerous pathways of T-lymphocyte function and down-regulates immunity surface molecules in order to evade host defense and increase viral infectivity. Alters the functionality of other immunity cells, like dendritic cells, monocytes/macrophages and NK cells. In terms of biological role, in infected CD4(+) T-lymphocytes, down-regulates the surface MHC-I, mature MHC-II, CD4, CD28, CCR5 and CXCR4 molecules. Mediates internalization and degradation of host CD4 through the interaction of with the cytoplasmic tail of CD4, the recruitment of AP-2 (clathrin adapter protein complex 2), internalization through clathrin coated pits, and subsequent transport to endosomes and lysosomes for degradation. Diverts host MHC-I molecules to the trans-Golgi network-associated endosomal compartments by an endocytic pathway to finally target them for degradation. MHC-I down-regulation may involve AP-1 (clathrin adapter protein complex 1) or possibly Src family kinase-ZAP70/Syk-PI3K cascade recruited by PACS2. In consequence infected cells are masked for immune recognition by cytotoxic T-lymphocytes. Decreasing the number of immune receptors also prevents reinfection by more HIV particles (superinfection). Down-regulates host SERINC3 and SERINC5 thereby excluding these proteins from the viral particles. Virion infectivity is drastically higher when SERINC3 or SERINC5 are excluded from the viral envelope, because these host antiviral proteins impair the membrane fusion event necessary for subsequent virion penetration. Its function is as follows. Bypasses host T-cell signaling by inducing a transcriptional program nearly identical to that of anti-CD3 cell activation. Interaction with TCR-zeta chain up-regulates the Fas ligand (FasL). Increasing surface FasL molecules and decreasing surface MHC-I molecules on infected CD4(+) cells send attacking cytotoxic CD8+ T-lymphocytes into apoptosis. Functionally, plays a role in optimizing the host cell environment for viral replication without causing cell death by apoptosis. Protects the infected cells from apoptosis in order to keep them alive until the next virus generation is ready to strike. Inhibits the Fas and TNFR-mediated death signals by blocking MAP3K5/ASK1. Decreases the half-life of TP53, protecting the infected cell against p53-mediated apoptosis. Inhibits the apoptotic signals regulated by the Bcl-2 family proteins through the formation of a Nef/PI3-kinase/PAK2 complex that leads to activation of PAK2 and induces phosphorylation of host BAD. Extracellular Nef protein targets CD4(+) T-lymphocytes for apoptosis by interacting with CXCR4 surface receptors. The polypeptide is Protein Nef (Homo sapiens (Human)).